An 83-amino-acid polypeptide reads, in one-letter code: Urotensin-2 (83 aa).

A propeptide spanning residues 49-71 (EVLLEKQSLLNPFSRVFGIRKQF) is cleaved from the precursor. A disulfide bond links cysteine 77 and cysteine 82.

Belongs to the urotensin-2 family.

It localises to the secreted. Functionally, urotensin is found in the teleost caudal neurosecretory system. It has a suggested role in osmoregulation and as a corticotropin-releasing factor. The non-hormonal portion of this precursor may be a urotensin binding protein, urophysin. The sequence is that of Urotensin-2 from Platichthys flesus (European flounder).